We begin with the raw amino-acid sequence, 870 residues long: H(+)/Cl(-) exchange transporter 6 (870 aa).

Residues Met-1–Lys-80 are Cytoplasmic-facing. 2 helical membrane-spanning segments follow: residues Trp-81–Val-113 and Leu-128–Ile-150. A Selectivity filter part_1 motif is present at residues Gly-156 to Pro-160. Position 157 (Ser-157) interacts with chloride. The segment at residues Ile-159 to Leu-166 is an intramembrane region (helical). 2 helical membrane passes run Arg-176–Gly-194 and Glu-200–Phe-217. Residues Gly-198–Pro-202 carry the Selectivity filter part_2 motif. 2 intramembrane regions (helical) span residues Phe-241 to Ala-253 and Pro-257 to Leu-265. The next 3 helical transmembrane spans lie at Thr-277 to Phe-294, Gly-335 to Arg-364, and Lys-371 to Ala-392. Asn-410, Asn-423, and Asn-433 each carry an N-linked (GlcNAc...) asparagine glycan. Helical transmembrane passes span Pro-463–Gly-482 and Gly-488–Ile-512. The Selectivity filter part_3 motif lies at Gly-488–Pro-492. Phe-490 serves as a coordination point for chloride. Residues Gly-520–Val-534 constitute an intramembrane region (helical). The segment at residues Val-535 to Met-537 is an intramembrane region (note=Loop between two helices). Positions Thr-538–Thr-549 form an intramembrane region, helical. Positions Asn-550–Thr-553 form an intramembrane region, note=Loop between two helices. The chain crosses the membrane as a helical span at residues Tyr-554 to Phe-572. At Asn-573–Leu-870 the chain is on the cytoplasmic side. Residue Tyr-577 participates in chloride binding. The region spanning Met-606–Ser-663 is the CBS 1 domain. ATP is bound at residue His-631–Ala-633. The residue at position 774 (Ser-774) is a Phosphoserine. The region spanning Met-808–Thr-869 is the CBS 2 domain. Thr-850–Asn-853 provides a ligand contact to ATP.

Belongs to the chloride channel (TC 2.A.49) family. ClC-6/CLCN6 subfamily. N-glycosylated on several asparagine residues. In terms of tissue distribution, detected in whole brain and in hippocampus neurons (at protein level). Detected in brain, trigeminus, dorsal root ganglion, spinal cord, eye, kidney, testis, skeletal muscle, thymus and pancreas. Isoform ClC-6c is expressed only in kidney.

Its subcellular location is the late endosome membrane. It catalyses the reaction 2 chloride(in) + H(+)(out) = 2 chloride(out) + H(+)(in). Voltage-gated channel mediating the exchange of chloride ions against protons. Functions as antiporter and contributes to the acidification of the late endosome lumen. The CLC channel family contains both chloride channels and proton-coupled anion transporters that exchange chloride or another anion for protons. The presence of conserved gating glutamate residues is typical for family members that function as antiporters. The sequence is that of H(+)/Cl(-) exchange transporter 6 from Mus musculus (Mouse).